The primary structure comprises 321 residues: Arabinan endo-1,5-alpha-L-arabinosidase A (321 aa).

Residues 1–19 (MYSLLTALSVPLLAGLAHG) form the signal peptide. Asp-34 serves as the catalytic Proton acceptor. N-linked (GlcNAc...) asparagine glycosylation is present at Asn-192. Glu-200 serves as the catalytic Proton donor.

This sequence belongs to the glycosyl hydrolase 43 family.

It localises to the secreted. It catalyses the reaction Endohydrolysis of (1-&gt;5)-alpha-arabinofuranosidic linkages in (1-&gt;5)-arabinans.. The protein operates within glycan metabolism; L-arabinan degradation. Functionally, endo-1,5-alpha-L-arabinanase involved in degradation of pectin. Its preferred substrate is linear 1,5-alpha-L-arabinan. This is Arabinan endo-1,5-alpha-L-arabinosidase A (abnA) from Aspergillus aculeatus.